We begin with the raw amino-acid sequence, 542 residues long: Chaperonin GroEL 1 (542 aa).

ATP is bound by residues 29–32 (TLGP), 86–90 (DGTTT), glycine 413, 477–479 (NAA), and aspartate 493.

It belongs to the chaperonin (HSP60) family. Forms a cylinder of 14 subunits composed of two heptameric rings stacked back-to-back. Interacts with the co-chaperonin GroES.

The protein resides in the cytoplasm. The catalysed reaction is ATP + H2O + a folded polypeptide = ADP + phosphate + an unfolded polypeptide.. In terms of biological role, together with its co-chaperonin GroES, plays an essential role in assisting protein folding. The GroEL-GroES system forms a nano-cage that allows encapsulation of the non-native substrate proteins and provides a physical environment optimized to promote and accelerate protein folding. The protein is Chaperonin GroEL 1 of Renibacterium salmoninarum (strain ATCC 33209 / DSM 20767 / JCM 11484 / NBRC 15589 / NCIMB 2235).